Reading from the N-terminus, the 283-residue chain is Large ribosomal subunit protein uL2c (283 aa).

The segment at 229–274 (GVVMNPIDHPHGGGEGKVPIGRKKPLTPWGHPALGRKSRKRRKYSD) is disordered. Basic residues predominate over residues 262–271 (LGRKSRKRRK).

Belongs to the universal ribosomal protein uL2 family. Part of the 50S ribosomal subunit.

It is found in the plastid. This chain is Large ribosomal subunit protein uL2c (rpl2), found in Aneura mirabilis (Parasitic liverwort).